We begin with the raw amino-acid sequence, 327 residues long: tRNA uridine(34) hydroxylase (327 aa).

The 95-residue stretch at 123-217 (SDPEVLVVDT…YLEEVPQEQS (95 aa)) folds into the Rhodanese domain. C177 acts as the Cysteine persulfide intermediate in catalysis.

This sequence belongs to the TrhO family.

It catalyses the reaction uridine(34) in tRNA + AH2 + O2 = 5-hydroxyuridine(34) in tRNA + A + H2O. Functionally, catalyzes oxygen-dependent 5-hydroxyuridine (ho5U) modification at position 34 in tRNAs. The polypeptide is tRNA uridine(34) hydroxylase (Vibrio cholerae serotype O1 (strain ATCC 39315 / El Tor Inaba N16961)).